Consider the following 528-residue polypeptide: Folylpolyglutamate synthase (528 aa).

Position 104-107 (104-107) interacts with ATP; it reads GKGG. Mg(2+) contacts are provided by Ser134, Glu208, and His236. ATP contacts are provided by Arg351 and Asp365.

This sequence belongs to the folylpolyglutamate synthase family. Requires a monovalent cation as cofactor.

Its subcellular location is the mitochondrion inner membrane. It localises to the mitochondrion matrix. The protein localises to the cytoplasm. The enzyme catalyses (6S)-5,6,7,8-tetrahydrofolyl-(gamma-L-Glu)(n) + L-glutamate + ATP = (6S)-5,6,7,8-tetrahydrofolyl-(gamma-L-Glu)(n+1) + ADP + phosphate + H(+). It participates in cofactor biosynthesis; tetrahydrofolylpolyglutamate biosynthesis. Its function is as follows. Catalyzes conversion of folates to polyglutamate derivatives allowing concentration of folate compounds in the cell and the intracellular retention of these cofactors, which are important substrates for most of the folate-dependent enzymes that are involved in one-carbon transfer reactions involved in purine, pyrimidine and amino acid synthesis. The polypeptide is Folylpolyglutamate synthase (met-6) (Neurospora crassa (strain ATCC 24698 / 74-OR23-1A / CBS 708.71 / DSM 1257 / FGSC 987)).